Here is a 122-residue protein sequence, read N- to C-terminus: Cytochrome c3 hydrogenase large chain (122 aa).

Requires Fe cation as cofactor.

It catalyses the reaction 2 Fe(III)-[cytochrome c3] + H2 = 2 Fe(II)-[cytochrome c3] + 2 H(+). This Acidithiobacillus ferrooxidans (Thiobacillus ferrooxidans) protein is Cytochrome c3 hydrogenase large chain (hoxG).